The sequence spans 1773 residues: ATP-binding cassette sub-family A member 17 (1773 aa).

Helical transmembrane passes span 22-42 (TLVT…VLYL), 262-282 (FPLL…NSIL), and 306-326 (AWFI…TVLF). A glycan (N-linked (GlcNAc...) asparagine) is linked at Asn340. The next 4 helical transmembrane spans lie at 342 to 362 (TLIF…AFMM), 372 to 392 (GTVI…YITF), 403 to 423 (ILSC…ISLF), and 444 to 464 (FTQV…VAFL). Residues 525–758 (IEIQHLYKVF…YGAGYYMTII (234 aa)) form the ABC transporter 1 domain. 561–568 (GHNGAGKT) contributes to the ATP binding site. N-linked (GlcNAc...) asparagine glycosylation occurs at Asn615. 7 helical membrane-spanning segments follow: residues 912 to 932 (LVLS…LSFF), 1088 to 1108 (LVVN…ILTV), 1134 to 1154 (LLWD…VFFW), 1166 to 1186 (IPAV…LVYT), 1198 to 1218 (CVKL…LVTV), 1236 to 1256 (IFLI…YYNF), and 1293 to 1313 (IGKY…LLFL). N-linked (GlcNAc...) asparagine glycosylation occurs at Asn1340. Residues 1369 to 1602 (LVVKELSKVY…FGSGYSLQAK (234 aa)) enclose the ABC transporter 2 domain. 1404–1411 (GLNGAGKT) contacts ATP. Residues 1690–1773 (NIQQGQAALD…SQPPSEPVLL (84 aa)) form a disordered region. Residues 1700-1710 (SSLSPSNSRPI) show a composition bias toward low complexity. Composition is skewed to pro residues over residues 1711 to 1740 (SSPP…PSRP) and 1763 to 1773 (PSQPPSEPVLL).

This sequence belongs to the ABC transporter superfamily. ABCA family. In terms of processing, N-glycosylated.

Its subcellular location is the endoplasmic reticulum membrane. The protein resides in the cytoplasm. It carries out the reaction cholesterol(in) + ATP + H2O = cholesterol(out) + ADP + phosphate + H(+). In terms of biological role, promotes cholesterol efflux from sperm which renders sperm capable of fertilization. Has also been shown to decrease levels of intracellular esterified neutral lipids including cholesteryl esters, fatty acid esters and triacylglycerols. The polypeptide is ATP-binding cassette sub-family A member 17 (Rattus norvegicus (Rat)).